Consider the following 317-residue polypeptide: Transaldolase (317 aa).

The Schiff-base intermediate with substrate role is filled by K132.

This sequence belongs to the transaldolase family. Type 1 subfamily. Homodimer.

It is found in the cytoplasm. It carries out the reaction D-sedoheptulose 7-phosphate + D-glyceraldehyde 3-phosphate = D-erythrose 4-phosphate + beta-D-fructose 6-phosphate. Its pathway is carbohydrate degradation; pentose phosphate pathway; D-glyceraldehyde 3-phosphate and beta-D-fructose 6-phosphate from D-ribose 5-phosphate and D-xylulose 5-phosphate (non-oxidative stage): step 2/3. Its function is as follows. Transaldolase is important for the balance of metabolites in the pentose-phosphate pathway. This chain is Transaldolase, found in Shigella dysenteriae serotype 1 (strain Sd197).